Reading from the N-terminus, the 440-residue chain is Glyceraldehyde-3-phosphate dehydrogenase, testis-specific (440 aa).

The interval 1-105 is testis-specific N-terminal extension; it reads MSRRDVVLTN…PPPPPLQKPA (105 aa). 2 stretches are compositionally biased toward pro residues: residues 40-75 and 83-102; these read PPKLEDPPPTVEEQPPPPPPPPPPPPPPPPPPPPQI and APPPPPPPPPPPPPPPPPLQ. Residues 40 to 106 are disordered; sequence PPKLEDPPPT…PPPPLQKPAR (67 aa). Residues 117–118, Asp138, Lys183, Tyr205, and Thr225 contribute to the NAD(+) site; that span reads RI. Residues 255–257, Thr286, 315–316, and Arg338 contribute to the D-glyceraldehyde 3-phosphate site; these read SCT and TG. The active-site Nucleophile is Cys256. Position 358 is a phosphoserine (Ser358). Position 420 (Asn420) interacts with NAD(+).

Belongs to the glyceraldehyde-3-phosphate dehydrogenase family. In terms of assembly, homotetramer. In terms of tissue distribution, testis specific.

The protein localises to the cytoplasm. It carries out the reaction D-glyceraldehyde 3-phosphate + phosphate + NAD(+) = (2R)-3-phospho-glyceroyl phosphate + NADH + H(+). It functions in the pathway carbohydrate degradation; glycolysis; pyruvate from D-glyceraldehyde 3-phosphate: step 1/5. May play an important role in regulating the switch between different pathways for energy production during spermiogenesis and in the spermatozoon. Required for sperm motility and male fertility. The chain is Glyceraldehyde-3-phosphate dehydrogenase, testis-specific (Gapdhs) from Mus musculus (Mouse).